We begin with the raw amino-acid sequence, 286 residues long: Apoptosis inhibitor 1 (286 aa).

2 BIR repeats span residues 29–96 and 131–199; these read LIER…CAYA and LQSR…CYFV. Zn(2+) contacts are provided by cysteine 169, cysteine 172, histidine 189, and cysteine 196. The RING-type zinc-finger motif lies at 238 to 274; it reads CKVCLERQRDAVLMPCRHFCVCVQCYFGLDQKCPTCR.

In terms of biological role, acts by blocking cellular apoptosis early in infection. Later, stimulates caspase-3-like protease activity and induces apoptosis, probably to favor the release of occluded virions. The protein is Apoptosis inhibitor 1 (IAP1) of Lepidoptera (butterflies and moths).